Here is a 299-residue protein sequence, read N- to C-terminus: ATP phosphoribosyltransferase (299 aa).

Belongs to the ATP phosphoribosyltransferase family. Long subfamily. As to quaternary structure, equilibrium between an active dimeric form, an inactive hexameric form and higher aggregates. Interconversion between the various forms is largely reversible and is influenced by the natural substrates and inhibitors of the enzyme. Mg(2+) is required as a cofactor.

It localises to the cytoplasm. It carries out the reaction 1-(5-phospho-beta-D-ribosyl)-ATP + diphosphate = 5-phospho-alpha-D-ribose 1-diphosphate + ATP. Its pathway is amino-acid biosynthesis; L-histidine biosynthesis; L-histidine from 5-phospho-alpha-D-ribose 1-diphosphate: step 1/9. Feedback inhibited by histidine. Functionally, catalyzes the condensation of ATP and 5-phosphoribose 1-diphosphate to form N'-(5'-phosphoribosyl)-ATP (PR-ATP). Has a crucial role in the pathway because the rate of histidine biosynthesis seems to be controlled primarily by regulation of HisG enzymatic activity. This Escherichia coli O81 (strain ED1a) protein is ATP phosphoribosyltransferase.